The primary structure comprises 392 residues: ABSCISIC ACID-INSENSITIVE 5-like protein 4 (392 aa).

A disordered region spans residues 1–22 (MGTHIDINNLGGDTSRGNESKP). Phosphoserine occurs at positions 28, 50, and 96. Thr-135 carries the phosphothreonine modification. Residues 266–297 (NMGGAGGTVTATSPGTSSAENNTWSSPVPYVF) are disordered. A compositionally biased stretch (polar residues) spans 274–291 (VTATSPGTSSAENNTWSS). Positions 311 to 374 (VERRQKRMIK…NSELKEFSKQ (64 aa)) constitute a bZIP domain. The basic motif stretch occupies residues 313-332 (RRQKRMIKNRESAARSRARK). Residues 339–360 (LEAEIESLKLVNQDLQKKQAEI) are leucine-zipper.

Belongs to the bZIP family. ABI5 subfamily. DNA-binding heterodimer. Interacts with ABI3 and the AFP proteins AFP1, AFP2, AFP3 and AFP4. Post-translationally, phosphorylated by CPK4, CPK11, SRK2D and SRK2I in vitro.

The protein resides in the nucleus. In terms of biological role, binds to the ABA-responsive element (ABRE). Could participate in abscisic acid-regulated gene expression. The chain is ABSCISIC ACID-INSENSITIVE 5-like protein 4 (ABF1) from Arabidopsis thaliana (Mouse-ear cress).